Consider the following 414-residue polypeptide: MLLKIKIKIRLFEKRYTIYFFLLKGKNKEEMEIIKKEFEHLVISELESSMLQKALDYSLTIVDIIKFVEITNFDIDPFMIDKFWHTMYDNSLLYISRDILEWMGYTGEFGEQRKAFKKLLKRKNINFTELSNNDPTKHLYPEIQKDSLLLSNAVVSQSKWIIMNSDDFKDSILMLNTKNSGKIRKYYRSFEKLLKLNLLYTLKFRERADKMQISSLETMMEEMRLERKQSEERSIKQEQLLLSIGYNLKELQEQKEEDTQKIDVLIDQNEDLKQNIEETNDKLDSVVEKLGIAVEDRAPRLKRASIRERFVLFKKNNSTNEIYQYYAIRGQSVYVNGRLSKLQSEKYPDMIILIDIICQPNPRNLFLRFKERIDGKPEWENNFIYAGNNVGCSFKLEKEMINIFKSLDEEKRDV.

Residues 209-293 (DKMQISSLET…DSVVEKLGIA (85 aa)) adopt a coiled-coil conformation.

The protein is Putative MSV199 domain-containing protein 148R of Acheta domesticus (House cricket).